The primary structure comprises 430 residues: Serine--tRNA ligase (430 aa).

237 to 239 provides a ligand contact to L-serine; sequence TAE. 268–270 serves as a coordination point for ATP; the sequence is RSE. Glu-291 contributes to the L-serine binding site. 355-358 contacts ATP; sequence EISS. Ser-391 serves as a coordination point for L-serine.

The protein belongs to the class-II aminoacyl-tRNA synthetase family. Type-1 seryl-tRNA synthetase subfamily. As to quaternary structure, homodimer. The tRNA molecule binds across the dimer.

It localises to the cytoplasm. It catalyses the reaction tRNA(Ser) + L-serine + ATP = L-seryl-tRNA(Ser) + AMP + diphosphate + H(+). The catalysed reaction is tRNA(Sec) + L-serine + ATP = L-seryl-tRNA(Sec) + AMP + diphosphate + H(+). The protein operates within aminoacyl-tRNA biosynthesis; selenocysteinyl-tRNA(Sec) biosynthesis; L-seryl-tRNA(Sec) from L-serine and tRNA(Sec): step 1/1. Its function is as follows. Catalyzes the attachment of serine to tRNA(Ser). Is also able to aminoacylate tRNA(Sec) with serine, to form the misacylated tRNA L-seryl-tRNA(Sec), which will be further converted into selenocysteinyl-tRNA(Sec). This chain is Serine--tRNA ligase, found in Salmonella paratyphi C (strain RKS4594).